Here is a 264-residue protein sequence, read N- to C-terminus: MKQYLELMNKVLHEGAQKDDRTGTGTLSIFGHQMRFNLQEGFPLVTTKRCHLRSIIHELLWFLKGDTNVAYLHENNVTIWDEWADENGDLGPVYGKQWRSWATPDGRHIDQLETVLNQLKNDPDSRRIIVSAWNVGELDKMALAPCHAFFQFYVANGKLSCQLYQRSCDVFLGLPFNIASYALLVHMMAQQCDLEPGDFVWTGGDTHLYSNHLEQARLQLTREPRPLPKLVIKRKPESLFDYRFEDFEIEGYDPHPAIKAPVAI.

Arg21 serves as a coordination point for dUMP. His51 lines the (6R)-5,10-methylene-5,6,7,8-tetrahydrofolate pocket. Position 126 to 127 (Arg126 to Arg127) interacts with dUMP. The active-site Nucleophile is Cys146. DUMP is bound by residues Arg166 to Asp169, Asn177, and His207 to Tyr209. Asp169 is a (6R)-5,10-methylene-5,6,7,8-tetrahydrofolate binding site. (6R)-5,10-methylene-5,6,7,8-tetrahydrofolate is bound at residue Ala263.

Belongs to the thymidylate synthase family. Bacterial-type ThyA subfamily. Homodimer.

The protein resides in the cytoplasm. It catalyses the reaction dUMP + (6R)-5,10-methylene-5,6,7,8-tetrahydrofolate = 7,8-dihydrofolate + dTMP. The protein operates within pyrimidine metabolism; dTTP biosynthesis. Its function is as follows. Catalyzes the reductive methylation of 2'-deoxyuridine-5'-monophosphate (dUMP) to 2'-deoxythymidine-5'-monophosphate (dTMP) while utilizing 5,10-methylenetetrahydrofolate (mTHF) as the methyl donor and reductant in the reaction, yielding dihydrofolate (DHF) as a by-product. This enzymatic reaction provides an intracellular de novo source of dTMP, an essential precursor for DNA biosynthesis. The protein is Thymidylate synthase of Cronobacter sakazakii (strain ATCC BAA-894) (Enterobacter sakazakii).